A 240-amino-acid chain; its full sequence is Lectin (240 aa).

Residues Glu-127 and Asp-129 each coordinate Mn(2+). Ca(2+) contacts are provided by Asp-129, Tyr-131, Asn-133, and Asp-138. 2 residues coordinate Mn(2+): Asp-138 and His-143.

It belongs to the leguminous lectin family. In terms of assembly, heterotetramer of two alpha and two beta chains; disulfide bond linked.

Binds preferentially to oligosaccharides bearing the sequence Man-alpha-1-&gt;2 Man-alpha-1-&gt;6 Man-alpha-1-&gt;6Man found in early steps of glycoprotein processing in the endoplasmic reticulum. It binds weakly to highly processed oligosaccharide structures. The protein is Lectin of Leucomphalos mildbraedii (Bowringia mildbraedii).